A 151-amino-acid chain; its full sequence is MSKESKITLIGSKLAKTGGEFIYLGEIEECKNCKFKRLCHGNLEVGRKYKIVSVRSANHPCIVHEGGVKVVEVVLADLTIMIESKKALEGVVLNHEPITCDNFDCEYYSFCNSEGIKEGEKYKIKQVLNEKINCPFGNSLKKVIVELVENK.

The protein belongs to the UPF0179 family.

In Methanocaldococcus jannaschii (strain ATCC 43067 / DSM 2661 / JAL-1 / JCM 10045 / NBRC 100440) (Methanococcus jannaschii), this protein is UPF0179 protein MJ1627.